Reading from the N-terminus, the 609-residue chain is Dihydroxy-acid dehydratase (609 aa).

Position 82 (Asp-82) interacts with Mg(2+). A [2Fe-2S] cluster-binding site is contributed by Cys-123. Positions 124 and 125 each coordinate Mg(2+). Lys-125 is subject to N6-carboxylysine. A [2Fe-2S] cluster-binding site is contributed by Cys-192. Glu-489 serves as a coordination point for Mg(2+). Ser-515 (proton acceptor) is an active-site residue.

The protein belongs to the IlvD/Edd family. As to quaternary structure, homodimer. The cofactor is [2Fe-2S] cluster. It depends on Mg(2+) as a cofactor.

The enzyme catalyses (2R)-2,3-dihydroxy-3-methylbutanoate = 3-methyl-2-oxobutanoate + H2O. It carries out the reaction (2R,3R)-2,3-dihydroxy-3-methylpentanoate = (S)-3-methyl-2-oxopentanoate + H2O. It participates in amino-acid biosynthesis; L-isoleucine biosynthesis; L-isoleucine from 2-oxobutanoate: step 3/4. Its pathway is amino-acid biosynthesis; L-valine biosynthesis; L-valine from pyruvate: step 3/4. Functions in the biosynthesis of branched-chain amino acids. Catalyzes the dehydration of (2R,3R)-2,3-dihydroxy-3-methylpentanoate (2,3-dihydroxy-3-methylvalerate) into 2-oxo-3-methylpentanoate (2-oxo-3-methylvalerate) and of (2R)-2,3-dihydroxy-3-methylbutanoate (2,3-dihydroxyisovalerate) into 2-oxo-3-methylbutanoate (2-oxoisovalerate), the penultimate precursor to L-isoleucine and L-valine, respectively. This is Dihydroxy-acid dehydratase from Azobacteroides pseudotrichonymphae genomovar. CFP2.